The chain runs to 345 residues: Phosphoribosylformylglycinamidine cyclo-ligase (345 aa).

This sequence belongs to the AIR synthase family.

The protein resides in the cytoplasm. It catalyses the reaction 2-formamido-N(1)-(5-O-phospho-beta-D-ribosyl)acetamidine + ATP = 5-amino-1-(5-phospho-beta-D-ribosyl)imidazole + ADP + phosphate + H(+). It participates in purine metabolism; IMP biosynthesis via de novo pathway; 5-amino-1-(5-phospho-D-ribosyl)imidazole from N(2)-formyl-N(1)-(5-phospho-D-ribosyl)glycinamide: step 2/2. This chain is Phosphoribosylformylglycinamidine cyclo-ligase, found in Salmonella typhi.